Consider the following 260-residue polypeptide: Adenosine 5'-phosphosulfate reductase (260 aa).

Residues cysteine 130, cysteine 131, cysteine 213, and cysteine 216 each coordinate [4Fe-4S] cluster. The active-site Nucleophile; cysteine thiosulfonate intermediate is the cysteine 241.

This sequence belongs to the PAPS reductase family. CysH subfamily. The cofactor is [4Fe-4S] cluster.

The protein localises to the cytoplasm. The enzyme catalyses [thioredoxin]-disulfide + sulfite + AMP + 2 H(+) = adenosine 5'-phosphosulfate + [thioredoxin]-dithiol. It functions in the pathway sulfur metabolism; hydrogen sulfide biosynthesis; sulfite from sulfate. Its function is as follows. Catalyzes the formation of sulfite from adenosine 5'-phosphosulfate (APS) using thioredoxin as an electron donor. The protein is Adenosine 5'-phosphosulfate reductase of Agrobacterium fabrum (strain C58 / ATCC 33970) (Agrobacterium tumefaciens (strain C58)).